A 51-amino-acid chain; its full sequence is Insulin (51 aa).

Disulfide bonds link C7/C37, C19/C50, and C36/C41.

This sequence belongs to the insulin family. As to quaternary structure, heterodimer of a B chain and an A chain linked by two disulfide bonds.

It is found in the secreted. Functionally, insulin decreases blood glucose concentration. It increases cell permeability to monosaccharides, amino acids and fatty acids. It accelerates glycolysis, the pentose phosphate cycle, and glycogen synthesis in liver. This chain is Insulin (INS), found in Hystrix cristata (North African crested porcupine).